Reading from the N-terminus, the 455-residue chain is Exodeoxyribonuclease 7 large subunit (455 aa).

This sequence belongs to the XseA family. In terms of assembly, heterooligomer composed of large and small subunits.

It is found in the cytoplasm. It carries out the reaction Exonucleolytic cleavage in either 5'- to 3'- or 3'- to 5'-direction to yield nucleoside 5'-phosphates.. Functionally, bidirectionally degrades single-stranded DNA into large acid-insoluble oligonucleotides, which are then degraded further into small acid-soluble oligonucleotides. The polypeptide is Exodeoxyribonuclease 7 large subunit (Lactobacillus acidophilus (strain ATCC 700396 / NCK56 / N2 / NCFM)).